The sequence spans 1107 residues: Miniconductance mechanosensitive channel MscM (1107 aa).

Residues 1 to 19 (MRLIITFLMAWCLSWGAYA) form the signal peptide. 11 consecutive transmembrane segments (helical) span residues 467 to 487 (VMML…ILVG), 522 to 542 (LFWS…LGYG), 551 to 571 (LAVA…VVMI), 600 to 620 (YLMS…FDNL), 628 to 648 (SLGR…TLSL), 674 to 694 (MMIG…LATA), 698 to 718 (LARL…YHVI), 785 to 805 (ILML…HSAF), 828 to 848 (PITL…TQLV), 875 to 895 (TITK…MIGI), and 910 to 930 (GLGF…IILF).

Belongs to the MscS (TC 1.A.23) family. In terms of assembly, homoheptamer.

Its subcellular location is the cell inner membrane. In terms of biological role, mechanosensitive channel that protects cells against hypoosmotic stress when highly overexpressed. Gates spontaneously in response to increased membrane tension. The chain is Miniconductance mechanosensitive channel MscM (mscM) from Escherichia coli (strain K12).